We begin with the raw amino-acid sequence, 164 residues long: Cytochrome c-type biogenesis protein CcmE (164 aa).

Residues 1-8 (MNPRRKSR) lie on the Cytoplasmic side of the membrane. The helical; Signal-anchor for type II membrane protein transmembrane segment at 9–29 (LYLAIVVLIGVALTATLMLYA) threads the bilayer. Over 30 to 164 (LRSNIDLFYT…ATPQNEGAKS (135 aa)) the chain is Periplasmic. Heme contacts are provided by His-130 and Tyr-134. Residues 131 to 148 (DEKYTPPEVADAMKENHK) are compositionally biased toward basic and acidic residues. The interval 131 to 164 (DEKYTPPEVADAMKENHKGPASAYATPQNEGAKS) is disordered. Residues 155–164 (ATPQNEGAKS) show a composition bias toward polar residues.

This sequence belongs to the CcmE/CycJ family.

The protein resides in the cell inner membrane. Its function is as follows. Heme chaperone required for the biogenesis of c-type cytochromes. Transiently binds heme delivered by CcmC and transfers the heme to apo-cytochromes in a process facilitated by CcmF and CcmH. The polypeptide is Cytochrome c-type biogenesis protein CcmE (Serratia proteamaculans (strain 568)).